The following is a 397-amino-acid chain: Lipid-A-disaccharide synthase (397 aa).

This sequence belongs to the LpxB family.

It catalyses the reaction a lipid X + a UDP-2-N,3-O-bis[(3R)-3-hydroxyacyl]-alpha-D-glucosamine = a lipid A disaccharide + UDP + H(+). It functions in the pathway bacterial outer membrane biogenesis; LPS lipid A biosynthesis. Condensation of UDP-2,3-diacylglucosamine and 2,3-diacylglucosamine-1-phosphate to form lipid A disaccharide, a precursor of lipid A, a phosphorylated glycolipid that anchors the lipopolysaccharide to the outer membrane of the cell. The polypeptide is Lipid-A-disaccharide synthase (Mannheimia succiniciproducens (strain KCTC 0769BP / MBEL55E)).